The following is a 278-amino-acid chain: Orotidine 5'-phosphate decarboxylase (278 aa).

Lysine 95 serves as the catalytic Proton donor.

It belongs to the OMP decarboxylase family. Type 2 subfamily.

The catalysed reaction is orotidine 5'-phosphate + H(+) = UMP + CO2. The protein operates within pyrimidine metabolism; UMP biosynthesis via de novo pathway; UMP from orotate: step 2/2. The sequence is that of Orotidine 5'-phosphate decarboxylase from Methylibium petroleiphilum (strain ATCC BAA-1232 / LMG 22953 / PM1).